The chain runs to 193 residues: Ion-translocating oxidoreductase complex subunit A (193 aa).

6 consecutive transmembrane segments (helical) span residues 5–25, 39–59, 63–83, 102–122, 134–154, and 171–191; these read LLLF…FLGL, MGMG…AWLI, ILIP…VIAV, LLGI…VALL, ALYG…FAAI, and AIAL…SGLV.

This sequence belongs to the NqrDE/RnfAE family. The complex is composed of six subunits: RsxA, RsxB, RsxC, RsxD, RsxE and RsxG.

The protein localises to the cell inner membrane. Its function is as follows. Part of a membrane-bound complex that couples electron transfer with translocation of ions across the membrane. Required to maintain the reduced state of SoxR. The polypeptide is Ion-translocating oxidoreductase complex subunit A (Escherichia fergusonii (strain ATCC 35469 / DSM 13698 / CCUG 18766 / IAM 14443 / JCM 21226 / LMG 7866 / NBRC 102419 / NCTC 12128 / CDC 0568-73)).